A 358-amino-acid polypeptide reads, in one-letter code: tRNA-specific 2-thiouridylase MnmA (358 aa).

ATP-binding positions include 6–13 (AMSGGVDS) and Leu32. The active-site Nucleophile is Cys101. Cys101 and Cys193 form a disulfide bridge. Gly125 lines the ATP pocket. The tract at residues 143 to 145 (KDQ) is interaction with tRNA. Residue Cys193 is the Cysteine persulfide intermediate of the active site.

Belongs to the MnmA/TRMU family.

Its subcellular location is the cytoplasm. It carries out the reaction S-sulfanyl-L-cysteinyl-[protein] + uridine(34) in tRNA + AH2 + ATP = 2-thiouridine(34) in tRNA + L-cysteinyl-[protein] + A + AMP + diphosphate + H(+). Its function is as follows. Catalyzes the 2-thiolation of uridine at the wobble position (U34) of tRNA, leading to the formation of s(2)U34. This chain is tRNA-specific 2-thiouridylase MnmA, found in Mycobacterium avium (strain 104).